The sequence spans 333 residues: Fatty acid hydroxylase domain-containing protein 2 (333 aa).

The next 6 membrane-spanning stretches (helical) occupy residues 29-49, 77-97, 134-154, 168-188, 215-235, and 237-257; these read FILGSGLLSFVAFWNSVTWHL, ILFFIGAIQVPCLFFWSFNGL, TVLFNQCMVSFPMVVFLYPFL, FHWFLLELAIFTLIEEVLFYY, VISLYAHPIEHVVSNMLPAIV, and PLVMGSHLSSITMWFSLALII. A Fatty acid hydroxylase domain is found at 176–299; sequence AIFTLIEEVL…LGVLDHLHGT (124 aa).

It belongs to the sterol desaturase family.

The protein resides in the cytoplasm. It localises to the membrane. Promotes megakaryocyte differentiation by enhancing ERK phosphorylation and up-regulating RUNX1 expression. This chain is Fatty acid hydroxylase domain-containing protein 2 (FAXDC2), found in Macaca fascicularis (Crab-eating macaque).